Reading from the N-terminus, the 1097-residue chain is Chitin synthase 2 (1097 aa).

The segment at 1 to 46 is disordered; the sequence is MAGYGHSTAGGFGSGSGSGPPGPQYMLPQYDEGDDPDADATPAGQG. Residues 1–748 are Extracellular-facing; it reads MAGYGHSTAG…HVEFLYHLLQ (748 aa). Gly residues predominate over residues 8-19; it reads TAGGFGSGSGSG. N-linked (GlcNAc...) asparagine glycosylation is present at N55. Disordered regions lie at residues 148–217 and 259–322; these read SGHG…YPRY and SSQI…RPPQ. The segment covering 284–296 has biased composition (polar residues); the sequence is STTYSSNTGTSAS. Positions 299-313 are enriched in basic and acidic residues; sequence DKFEHYGPIPEEGKH. N-linked (GlcNAc...) asparagine glycosylation is found at N416 and N424. The helical transmembrane segment at 749–769 threads the bilayer; the sequence is LLFTYFSLANFYLAFYFIAGG. The Cytoplasmic segment spans residues 770-786; that stretch reads LADPHVDPFNSDGHVAR. Residues 787–807 form a helical membrane-spanning segment; it reads IIFNILRYVCVLLICTQFILS. At 808–821 the chain is on the extracellular side; it reads LGNRPQGAKRMYLA. A helical transmembrane segment spans residues 822–842; it reads SMIIYAVIMVYTTFATIFIVV. The Cytoplasmic segment spans residues 843–865; that stretch reads RQIQPSQKSDDKPDLELGNNVFT. A helical transmembrane segment spans residues 866-886; the sequence is NLIVSVASTLGLYFVMSFLYL. At 887–894 the chain is on the extracellular side; that stretch reads DPWHMFTS. The chain crosses the membrane as a helical span at residues 895–915; it reads AIQYFVLLPSYICTLQIYAFC. Residues 916 to 993 are Cytoplasmic-facing; sequence NTHDVTWGTK…QDYYKSVRTY (78 aa). The helical transmembrane segment at 994–1014 threads the bilayer; that stretch reads MVVSWMVANATLAMAVSEAYG. At 1015–1025 the chain is on the extracellular side; that stretch reads DSEIGDNFYLR. The chain crosses the membrane as a helical span at residues 1026 to 1046; sequence FILWAVAALALFRALGSTTFA. The Cytoplasmic portion of the chain corresponds to 1047 to 1097; the sequence is AINLVSALVEGRVRLRLNMKGFRWIKEKWGDADVKGKFEGLGDRARGLARR.

This sequence belongs to the chitin synthase family.

It localises to the cell membrane. It carries out the reaction [(1-&gt;4)-N-acetyl-beta-D-glucosaminyl](n) + UDP-N-acetyl-alpha-D-glucosamine = [(1-&gt;4)-N-acetyl-beta-D-glucosaminyl](n+1) + UDP + H(+). Polymerizes chitin, a structural polymer of the cell wall and septum, by transferring the sugar moiety of UDP-GlcNAc to the non-reducing end of the growing chitin polymer. This is Chitin synthase 2 (chs-2) from Neurospora crassa (strain ATCC 24698 / 74-OR23-1A / CBS 708.71 / DSM 1257 / FGSC 987).